Here is a 357-residue protein sequence, read N- to C-terminus: Histidine biosynthesis bifunctional protein HisB (357 aa).

The histidinol-phosphatase stretch occupies residues 1–167 (MNDKILFIDR…IHKYLMQNSH (167 aa)). Asp9 serves as the catalytic Nucleophile. Positions 9 and 11 each coordinate Mg(2+). Residue Asp11 is the Proton donor of the active site. 4 residues coordinate Zn(2+): Cys93, His95, Cys101, and Cys103. Asp130 is a binding site for Mg(2+). An imidazoleglycerol-phosphate dehydratase region spans residues 168 to 357 (RVAHIQRITN…QIPSSKGILL (190 aa)).

It in the N-terminal section; belongs to the histidinol-phosphatase family. The protein in the C-terminal section; belongs to the imidazoleglycerol-phosphate dehydratase family. It depends on Mg(2+) as a cofactor. The cofactor is Zn(2+).

The protein resides in the cytoplasm. It carries out the reaction D-erythro-1-(imidazol-4-yl)glycerol 3-phosphate = 3-(imidazol-4-yl)-2-oxopropyl phosphate + H2O. It catalyses the reaction L-histidinol phosphate + H2O = L-histidinol + phosphate. It functions in the pathway amino-acid biosynthesis; L-histidine biosynthesis; L-histidine from 5-phospho-alpha-D-ribose 1-diphosphate: step 6/9. It participates in amino-acid biosynthesis; L-histidine biosynthesis; L-histidine from 5-phospho-alpha-D-ribose 1-diphosphate: step 8/9. In Blochmanniella floridana, this protein is Histidine biosynthesis bifunctional protein HisB.